Reading from the N-terminus, the 152-residue chain is Ribonuclease H (152 aa).

The RNase H type-1 domain occupies 1 to 142; the sequence is MDSKVVIYTD…ADKLAVQGRE (142 aa). Positions 10, 48, 70, and 134 each coordinate Mg(2+).

This sequence belongs to the RNase H family. Monomer. The cofactor is Mg(2+).

The protein resides in the cytoplasm. It catalyses the reaction Endonucleolytic cleavage to 5'-phosphomonoester.. Endonuclease that specifically degrades the RNA of RNA-DNA hybrids. This Rickettsia typhi (strain ATCC VR-144 / Wilmington) protein is Ribonuclease H.